Here is a 486-residue protein sequence, read N- to C-terminus: Protein nucleotidyltransferase YdiU (486 aa).

Glycine 90, glycine 92, arginine 93, lysine 113, aspartate 125, glycine 126, arginine 176, and arginine 183 together coordinate ATP. Aspartate 252 acts as the Proton acceptor in catalysis. The Mg(2+) site is built by asparagine 253 and aspartate 262. Aspartate 262 provides a ligand contact to ATP.

Belongs to the SELO family. It depends on Mg(2+) as a cofactor. The cofactor is Mn(2+).

It carries out the reaction L-seryl-[protein] + ATP = 3-O-(5'-adenylyl)-L-seryl-[protein] + diphosphate. The catalysed reaction is L-threonyl-[protein] + ATP = 3-O-(5'-adenylyl)-L-threonyl-[protein] + diphosphate. The enzyme catalyses L-tyrosyl-[protein] + ATP = O-(5'-adenylyl)-L-tyrosyl-[protein] + diphosphate. It catalyses the reaction L-histidyl-[protein] + UTP = N(tele)-(5'-uridylyl)-L-histidyl-[protein] + diphosphate. It carries out the reaction L-seryl-[protein] + UTP = O-(5'-uridylyl)-L-seryl-[protein] + diphosphate. The catalysed reaction is L-tyrosyl-[protein] + UTP = O-(5'-uridylyl)-L-tyrosyl-[protein] + diphosphate. Nucleotidyltransferase involved in the post-translational modification of proteins. It can catalyze the addition of adenosine monophosphate (AMP) or uridine monophosphate (UMP) to a protein, resulting in modifications known as AMPylation and UMPylation. This is Protein nucleotidyltransferase YdiU from Pseudomonas paraeruginosa (strain DSM 24068 / PA7) (Pseudomonas aeruginosa (strain PA7)).